The primary structure comprises 492 residues: Endoglycoceramidase I (492 aa).

Positions 1-14 are cleaved as a signal peptide; sequence MRKTVVAFAAAIAA. The N-palmitoyl cysteine moiety is linked to residue Cys-15. Residue Cys-15 is the site of S-diacylglycerol cysteine attachment. Substrate-binding positions include Lys-61, Asp-62, 131 to 133, and 213 to 214; these read HQD and NE. Glu-214 functions as the Proton donor in the catalytic mechanism. Cys-224 and Cys-229 are disulfide-bonded. Residues Asn-265, Gln-298, and Tyr-302 each coordinate substrate. A disulfide bridge links Cys-294 with Cys-313. Glu-339 (nucleophile) is an active-site residue. Residue Trp-365 coordinates substrate. Residues 467–492 form a disordered region; the sequence is NRPGSAGAEVPDGPIETSSSGSSGSS.

The protein belongs to the glycosyl hydrolase 5 (cellulase A) family.

The protein localises to the secreted. It is found in the membrane. The enzyme catalyses an oligoglycosyl-(1-&gt;4)-beta-D-glucosyl-(1&lt;-&gt;1)-ceramide + H2O = an oligoglycosyl-(1-&gt;4)-D-glucose + an N-acyl-sphingoid base. It carries out the reaction a ganglioside GM3 + H2O = N-acetyl-alpha-neuraminosyl-(2-&gt;3)-beta-D-galactosyl-(1-&gt;4)-D-glucose + an N-acyl-sphingoid base. It catalyses the reaction a ganglioside GM1 + H2O = beta-D-Gal-(1-&gt;3)-beta-D-GalNAc-(1-&gt;4)-[alpha-Neu5Ac-(2-&gt;3)]-beta-D-Gal-(1-&gt;4)-D-Glc + an N-acyl-sphingoid base. The catalysed reaction is a ganglioside Fuc-GM1 + H2O = alpha-Fuc-(1-&gt;2)-beta-Gal-(1-&gt;3)-beta-GalNAc-(1-&gt;4)-[alpha-Neu5Ac-(2-&gt;3)]-beta-Gal-(1-&gt;4)-Glc + an N-acyl-sphingoid base. The enzyme catalyses a beta-D-galactosyl-(1-&gt;4)-beta-D-glucosyl-(1&lt;-&gt;1)-ceramide + H2O = lactose + an N-acyl-sphingoid base. Hydrolyzes glycosphingolipids; exhibits broad substrate specificity including monosialodihexosylganglioside (GM3), monosialotetrahexosylganglioside (GM1), fucosyl-GM1, lactosylceramide, globotriosylceramide, globotetraosylceramide, ganglioside GD1a, and ganglioside GD1b. No activity towards glucosylceramide and galactosylceramide. The sequence is that of Endoglycoceramidase I from Rhodococcus hoagii (strain 103S) (Rhodococcus equi).